Consider the following 373-residue polypeptide: Putative aminopeptidase SgcX (373 aa).

Residues His67 and Asp180 each coordinate a divalent metal cation. The Proton acceptor role is filled by Glu212. The a divalent metal cation site is built by Glu213, Asp235, and His329.

This sequence belongs to the peptidase M42 family. The cofactor is a divalent metal cation.

The polypeptide is Putative aminopeptidase SgcX (sgcX) (Escherichia coli (strain K12)).